The primary structure comprises 471 residues: MGEQTEFEPIQLSPLDQAIPPVYIRILLCFSVVNVDRAISQLQTGVSSLLSALPFLSGDVVRYTAPGKTKWLYQLCPPTHQVQATGVLVVKHHQMRCMVDEKRFAPSSTSHIPLSPFAEPARPAPIFRVQANAYIDGITLGFAFHHIAVDATGMGVIISELARHCRSSPPPSLLCPDYERATRQLISNSRATECSGLDHSGDYISCQALSPPAEGSEDASPSIEISTETRTFVFPAARLESLKNACIEMLPTLDQQQRQQNPCLDEPARTKVPWLSTNDVFVALLWVCLTRCRYQEDQNSGLPSDEHTRICMGVNMRSRIQPPLSADYLGNAILSLSFKLNVNVFRRTQVTNESIEGVDSKDIEHKQWLATICRVARNIRRGVNGMDDSYFRSVVSFLEDSSDCRLFDYARCDFCVPSWRHLCVYHADFGEMGRPKSLEVFDVPGDGSFCILPQHYGAAAPWELLLGLLKA.

This sequence belongs to the fumigaclavine B O-acetyltransferase family. In terms of assembly, monomer.

It catalyses the reaction dideacetyl astellolide A + acetyl-CoA = 14-deacetyl astellolide A + CoA. The enzyme catalyses dideacetyl astellolide B + acetyl-CoA = 14-deacetyl astellolide B + CoA. The protein operates within secondary metabolite biosynthesis; terpenoid biosynthesis. Its function is as follows. O-acetyltransferase; part of the gene cluster that mediates the biosynthesis of astellolides, drimane-type sesquiterpene esters that show antimicrobial, anti-inflammatory, and anti-tumor activities. The first step in astellolide biosynthesis is performed by the sesquiterpene cyclase astC that catalyzes the formation of drimanyl pyrophosphate from farnesyl pyrophosphate. Drimanyl pyrophosphate is then dephosphorylated by the sesquiterpene phosphatase astI to produce drimanyl monophosphate which is further dephosphorylated to drim-8-ene-11-ol by atsK. Drim-8-ene-11-ol is converted to confertifolin, probably by the cytochrome P450 monooxygenase astD and/or the dehydrogenase astE. The cytochrome P450 monooxygenases astB, astF and astJ then hydroxylate confertifolin at C6, C14, or C15 to form trihydroxy confertifolin. The nonribosomal peptide synthetase astA catalyzes ester bond formation between trihydroxy contifolin and benzoic acid (BA) or 4-hydroxy benzoic acid (4HBA), leading to the formation of dideacetyl astellolides A and B, respectively. Finally, the O-acetyltransferase astG converts dideacetyl astellolides A and B into deacetyl astellolides A and B. This is O-acetyltransferase astG from Aspergillus oryzae (strain ATCC 42149 / RIB 40) (Yellow koji mold).